The sequence spans 390 residues: Putative gustatory receptor 59d (390 aa).

The Cytoplasmic portion of the chain corresponds to 1 to 38 (MADLLKLCLRIAYAYGRLTGVINFKIDLKTGQALVTRG). A helical membrane pass occupies residues 39 to 59 (ATLISVSTHLLIFALLLYQTM). The Extracellular portion of the chain corresponds to 60–75 (RKSVVNVMWKYANSLH). Residues 76 to 96 (EYVFLVIAGFRVVCVFLELVS) traverse the membrane as a helical segment. Residues 97 to 128 (RWSQRRTFVRLFNSFRRLYQRNPDIIQYCRRS) lie on the Cytoplasmic side of the membrane. Residues 129-149 (IVSKFFCVTMTETLHIIVTLA) form a helical membrane-spanning segment. Topologically, residues 150 to 156 (MMRNRLS) are extracellular. Residues 157–177 (IALALRIWAVLSLTAIINVII) traverse the membrane as a helical segment. Residues 178-252 (TQYYVATACV…NLSTAYEGEV (75 aa)) lie on the Cytoplasmic side of the membrane. A helical membrane pass occupies residues 253-273 (VCLVITYYLNMLGTSYLLFSI). Residues 274 to 283 (SKYGNFGNNL) lie on the Extracellular side of the membrane. The helical transmembrane segment at 284–304 (LVIITLCGIVYFVFYVVDCWI) threads the bilayer. Topologically, residues 305 to 366 (NAFNVFYLLD…MYGLFEFGRG (62 aa)) are cytoplasmic. Residues 367–383 (TSFAVFNSLLTHSLLLI) traverse the membrane as a helical segment. At 384–390 (QYDVQNF) the chain is on the extracellular side.

It belongs to the insect chemoreceptor superfamily. Gustatory receptor (GR) family. Gr22e subfamily. Expressed in the adult labellar chemosensory neurons. In larvae, is expressed in neurons of the terminal external chemosensory organ as well as in the dorsal pharyngeal sense organ.

Its subcellular location is the cell membrane. Functionally, probable gustatory receptor which mediates acceptance or avoidance behavior, depending on its substrates. The protein is Putative gustatory receptor 59d (Gr59d) of Drosophila melanogaster (Fruit fly).